The chain runs to 109 residues: Thiosulfate sulfurtransferase GlpE (109 aa).

Residues 17–105 (AQGQALLLDI…WQRAYPEEVA (89 aa)) form the Rhodanese domain. C65 functions as the Cysteine persulfide intermediate in the catalytic mechanism.

Belongs to the GlpE family.

The protein resides in the cytoplasm. It carries out the reaction thiosulfate + hydrogen cyanide = thiocyanate + sulfite + 2 H(+). The enzyme catalyses thiosulfate + [thioredoxin]-dithiol = [thioredoxin]-disulfide + hydrogen sulfide + sulfite + 2 H(+). Functionally, transferase that catalyzes the transfer of sulfur from thiosulfate to thiophilic acceptors such as cyanide or dithiols. May function in a CysM-independent thiosulfate assimilation pathway by catalyzing the conversion of thiosulfate to sulfite, which can then be used for L-cysteine biosynthesis. The protein is Thiosulfate sulfurtransferase GlpE of Edwardsiella ictaluri (strain 93-146).